Consider the following 161-residue polypeptide: Large ribosomal subunit protein bL17 (161 aa).

The segment at 126-161 (KVAKKATRTRRSKKTTEAAPAAEVPATEEPKAESAE) is disordered. Positions 129–138 (KKATRTRRSK) are enriched in basic residues. A compositionally biased stretch (low complexity) spans 142 to 152 (EAAPAAEVPAT).

The protein belongs to the bacterial ribosomal protein bL17 family. Part of the 50S ribosomal subunit. Contacts protein L32.

This chain is Large ribosomal subunit protein bL17, found in Bacteroides fragilis (strain ATCC 25285 / DSM 2151 / CCUG 4856 / JCM 11019 / LMG 10263 / NCTC 9343 / Onslow / VPI 2553 / EN-2).